Consider the following 154-residue polypeptide: UPF0756 membrane protein BLi03063/BL00400 (154 aa).

A run of 4 helical transmembrane segments spans residues 8–28 (FLIL…IIAV), 54–74 (WGVT…EIGF), 87–107 (WIAL…ITLL), and 117–137 (LVFG…GPLI).

This sequence belongs to the UPF0756 family.

The protein resides in the cell membrane. This chain is UPF0756 membrane protein BLi03063/BL00400, found in Bacillus licheniformis (strain ATCC 14580 / DSM 13 / JCM 2505 / CCUG 7422 / NBRC 12200 / NCIMB 9375 / NCTC 10341 / NRRL NRS-1264 / Gibson 46).